The sequence spans 59 residues: Protein translocase subunit SecE (59 aa).

A helical transmembrane segment spans residues 30–50 (ITVITTVIFFAIFFALIDSGI).

It belongs to the SecE/SEC61-gamma family. As to quaternary structure, component of the Sec protein translocase complex. Heterotrimer consisting of SecY, SecE and SecG subunits. The heterotrimers can form oligomers, although 1 heterotrimer is thought to be able to translocate proteins. Interacts with the ribosome. Interacts with SecDF, and other proteins may be involved. Interacts with SecA.

It is found in the cell membrane. Essential subunit of the Sec protein translocation channel SecYEG. Clamps together the 2 halves of SecY. May contact the channel plug during translocation. This Bacillus licheniformis protein is Protein translocase subunit SecE.